Consider the following 208-residue polypeptide: Mediator of RNA polymerase II transcription subunit 18 (208 aa).

The protein belongs to the Mediator complex subunit 18 family. In terms of assembly, component of the Mediator complex.

The protein localises to the nucleus. Its function is as follows. Component of the Mediator complex, a coactivator involved in the regulated transcription of nearly all RNA polymerase II-dependent genes. Mediator functions as a bridge to convey information from gene-specific regulatory proteins to the basal RNA polymerase II transcription machinery. Mediator is recruited to promoters by direct interactions with regulatory proteins and serves as a scaffold for the assembly of a functional preinitiation complex with RNA polymerase II and the general transcription factors. The chain is Mediator of RNA polymerase II transcription subunit 18 (med18) from Xenopus tropicalis (Western clawed frog).